Consider the following 235-residue polypeptide: Ribonuclease 3 (235 aa).

The RNase III domain occupies 6–131 (IDQLERLTEH…LIAVMYLDGG (126 aa)). Residue glutamate 44 coordinates Mg(2+). Aspartate 48 is an active-site residue. 2 residues coordinate Mg(2+): aspartate 117 and glutamate 120. Residue glutamate 120 is part of the active site. The 70-residue stretch at 156–225 (DAKTELQEWA…AEKVLRREGI (70 aa)) folds into the DRBM domain.

This sequence belongs to the ribonuclease III family. In terms of assembly, homodimer. Mg(2+) is required as a cofactor.

It is found in the cytoplasm. The enzyme catalyses Endonucleolytic cleavage to 5'-phosphomonoester.. In terms of biological role, digests double-stranded RNA. Involved in the processing of primary rRNA transcript to yield the immediate precursors to the large and small rRNAs (23S and 16S). Processes some mRNAs, and tRNAs when they are encoded in the rRNA operon. Processes pre-crRNA and tracrRNA of type II CRISPR loci if present in the organism. The sequence is that of Ribonuclease 3 from Bartonella quintana (strain Toulouse) (Rochalimaea quintana).